Reading from the N-terminus, the 411-residue chain is Multifunctional CCA protein (411 aa).

ATP contacts are provided by Gly-8 and Arg-11. The CTP site is built by Gly-8 and Arg-11. Positions 21 and 23 each coordinate Mg(2+). Arg-91, Arg-137, and Arg-140 together coordinate ATP. Positions 91, 137, and 140 each coordinate CTP. The region spanning 228–329 (TGVHALLALE…LKTLLALDGL (102 aa)) is the HD domain.

Belongs to the tRNA nucleotidyltransferase/poly(A) polymerase family. Bacterial CCA-adding enzyme type 1 subfamily. In terms of assembly, monomer. Can also form homodimers and oligomers. Mg(2+) serves as cofactor. Requires Ni(2+) as cofactor.

It carries out the reaction a tRNA precursor + 2 CTP + ATP = a tRNA with a 3' CCA end + 3 diphosphate. It catalyses the reaction a tRNA with a 3' CCA end + 2 CTP + ATP = a tRNA with a 3' CCACCA end + 3 diphosphate. Catalyzes the addition and repair of the essential 3'-terminal CCA sequence in tRNAs without using a nucleic acid template. Adds these three nucleotides in the order of C, C, and A to the tRNA nucleotide-73, using CTP and ATP as substrates and producing inorganic pyrophosphate. tRNA 3'-terminal CCA addition is required both for tRNA processing and repair. Also involved in tRNA surveillance by mediating tandem CCA addition to generate a CCACCA at the 3' terminus of unstable tRNAs. While stable tRNAs receive only 3'-terminal CCA, unstable tRNAs are marked with CCACCA and rapidly degraded. In Teredinibacter turnerae (strain ATCC 39867 / T7901), this protein is Multifunctional CCA protein.